The chain runs to 174 residues: Protein RESTRICTED TEV MOVEMENT 1 (174 aa).

The Jacalin-type lectin domain maps to 1–152; that stretch reads MKIGPVGKHD…LQYIGVYLRP (152 aa).

This sequence belongs to the jacalin lectin family. As to quaternary structure, self-interacts. Interacts with RTM3. Expressed at low levels exclusively in phloem-associated cells (e.g. sieve elements and adjacent cells).

The protein localises to the cytoplasm. In terms of biological role, required for the restriction of long-distance movement of the pathogenic tobacco etch virus (TEV) without causing a hypersensitive response or inducing systemic acquired resistance. The sequence is that of Protein RESTRICTED TEV MOVEMENT 1 (RTM1) from Arabidopsis thaliana (Mouse-ear cress).